The chain runs to 238 residues: 2-C-methyl-D-erythritol 4-phosphate cytidylyltransferase (238 aa).

This sequence belongs to the IspD/TarI cytidylyltransferase family. IspD subfamily.

It carries out the reaction 2-C-methyl-D-erythritol 4-phosphate + CTP + H(+) = 4-CDP-2-C-methyl-D-erythritol + diphosphate. It participates in isoprenoid biosynthesis; isopentenyl diphosphate biosynthesis via DXP pathway; isopentenyl diphosphate from 1-deoxy-D-xylulose 5-phosphate: step 2/6. Functionally, catalyzes the formation of 4-diphosphocytidyl-2-C-methyl-D-erythritol from CTP and 2-C-methyl-D-erythritol 4-phosphate (MEP). The chain is 2-C-methyl-D-erythritol 4-phosphate cytidylyltransferase from Pelotomaculum thermopropionicum (strain DSM 13744 / JCM 10971 / SI).